A 784-amino-acid chain; its full sequence is DNA ligase (784 aa).

NAD(+) is bound by residues 31 to 35, 80 to 81, and Glu120; these read DAEYD and SL. The active-site N6-AMP-lysine intermediate is the Lys122. Positions 143, 180, 296, and 320 each coordinate NAD(+). Zn(2+) is bound by residues Cys414, Cys417, Cys444, and Cys450. In terms of domain architecture, BRCT spans 701–784; it reads AEGLPLAGQT…AFMAEQGITL (84 aa).

This sequence belongs to the NAD-dependent DNA ligase family. LigA subfamily. The cofactor is Mg(2+). It depends on Mn(2+) as a cofactor.

The enzyme catalyses NAD(+) + (deoxyribonucleotide)n-3'-hydroxyl + 5'-phospho-(deoxyribonucleotide)m = (deoxyribonucleotide)n+m + AMP + beta-nicotinamide D-nucleotide.. Functionally, DNA ligase that catalyzes the formation of phosphodiester linkages between 5'-phosphoryl and 3'-hydroxyl groups in double-stranded DNA using NAD as a coenzyme and as the energy source for the reaction. It is essential for DNA replication and repair of damaged DNA. This Pseudomonas entomophila (strain L48) protein is DNA ligase.